The chain runs to 262 residues: Polyamine aminopropyltransferase (262 aa).

Residues 1-249 (MWITQEITPY…DIHRAAFALP (249 aa)) form the PABS domain. Asn-29 contributes to the S-methyl-5'-thioadenosine binding site. A spermidine-binding site is contributed by Asp-83. Asp-155 serves as the catalytic Proton acceptor.

It belongs to the spermidine/spermine synthase family. Homodimer or homotetramer.

The protein resides in the cytoplasm. The catalysed reaction is S-adenosyl 3-(methylsulfanyl)propylamine + putrescine = S-methyl-5'-thioadenosine + spermidine + H(+). It functions in the pathway amine and polyamine biosynthesis; spermidine biosynthesis; spermidine from putrescine: step 1/1. Catalyzes the irreversible transfer of a propylamine group from the amino donor S-adenosylmethioninamine (decarboxy-AdoMet) to putrescine (1,4-diaminobutane) to yield spermidine. The sequence is that of Polyamine aminopropyltransferase from Helicobacter pylori (strain P12).